The sequence spans 263 residues: Tryptophan synthase alpha chain (263 aa).

Active-site proton acceptor residues include Glu41 and Asp52.

It belongs to the TrpA family. In terms of assembly, tetramer of two alpha and two beta chains.

It carries out the reaction (1S,2R)-1-C-(indol-3-yl)glycerol 3-phosphate + L-serine = D-glyceraldehyde 3-phosphate + L-tryptophan + H2O. It functions in the pathway amino-acid biosynthesis; L-tryptophan biosynthesis; L-tryptophan from chorismate: step 5/5. In terms of biological role, the alpha subunit is responsible for the aldol cleavage of indoleglycerol phosphate to indole and glyceraldehyde 3-phosphate. In Geobacillus sp. (strain WCH70), this protein is Tryptophan synthase alpha chain.